Consider the following 297-residue polypeptide: Urease accessory protein UreD (297 aa).

The disordered stretch occupies residues 1 to 41 (MPQAADIATAPQRPSAPGDVVAAGQPPRARGRAHVSSKRRD).

Belongs to the UreD family. UreD, UreF and UreG form a complex that acts as a GTP-hydrolysis-dependent molecular chaperone, activating the urease apoprotein by helping to assemble the nickel containing metallocenter of UreC. The UreE protein probably delivers the nickel.

Its subcellular location is the cytoplasm. In terms of biological role, required for maturation of urease via the functional incorporation of the urease nickel metallocenter. This is Urease accessory protein UreD from Ruegeria sp. (strain TM1040) (Silicibacter sp.).